The chain runs to 101 residues: Integration host factor subunit beta (101 aa).

The tract at residues 62–84 (RNPKTGESVALPGKHVPHFKPGK) is disordered.

This sequence belongs to the bacterial histone-like protein family. As to quaternary structure, heterodimer of an alpha and a beta chain.

This protein is one of the two subunits of integration host factor, a specific DNA-binding protein that functions in genetic recombination as well as in transcriptional and translational control. This Stenotrophomonas maltophilia (strain K279a) protein is Integration host factor subunit beta.